The following is a 216-amino-acid chain: Flavin-dependent thymidylate synthase (216 aa).

In terms of domain architecture, ThyX spans G9–Y206. FAD is bound by residues S55, R78 to R80, and E86. DUMP is bound by residues Q75 to R78, E86 to R90, and R145. The ThyX motif signature appears at R78–S88. FAD is bound by residues N161–R163 and N167. Position 172 (R172) interacts with dUMP. R172 acts as the Involved in ionization of N3 of dUMP, leading to its activation in catalysis.

It belongs to the thymidylate synthase ThyX family. As to quaternary structure, homotetramer. FAD serves as cofactor.

The catalysed reaction is dUMP + (6R)-5,10-methylene-5,6,7,8-tetrahydrofolate + NADPH + H(+) = dTMP + (6S)-5,6,7,8-tetrahydrofolate + NADP(+). It functions in the pathway pyrimidine metabolism; dTTP biosynthesis. Functionally, catalyzes the reductive methylation of 2'-deoxyuridine-5'-monophosphate (dUMP) to 2'-deoxythymidine-5'-monophosphate (dTMP) while utilizing 5,10-methylenetetrahydrofolate (mTHF) as the methyl donor, and NADPH and FADH(2) as the reductant. The polypeptide is Flavin-dependent thymidylate synthase (Thermotoga neapolitana (strain ATCC 49049 / DSM 4359 / NBRC 107923 / NS-E)).